A 160-amino-acid polypeptide reads, in one-letter code: Putative oxygenase ATEG_00330 (160 aa).

The EthD domain occupies 24–100; it reads HYFGTALHAK…RNIAADPEFA (77 aa).

The protein belongs to the tpcK family.

In terms of biological role, putative oxygenase; part of the gene cluster that mediates the biosynthesis of isoflavipucine. The PKS part of the PKS-NRPS ATEG_00325 probably assembles a triketide from an acetyl starter and two malonyl-CoA extender units. The poly-beta-keto intermediate would then be fused to the leucine unit by the NRPS part. The resulting amide would be liberated from the PKS-NRPS through reductive release of the linear PKS-NRPS product from the enzyme complex. Further steps in isoflapucine synthesis include a cyclization step, an oxidation step, a hydrolysis step involving a trans-amidation, and an additional oxidation step, leading to flavipucine. Formation of isoflavipucine from flavipucine requires an unusual rearrangement. Alternative rearrangement reactions could build up rubrobramide, representing a branching of flavipucine biosynthesis. The enzymes involved in the post-PKS-NRPS steps have not been identified yet, but the putative oxygenases ATEG_003329 and ATEG_00330 encoded by the cluster could play a role. The protein is Putative oxygenase ATEG_00330 of Aspergillus terreus (strain NIH 2624 / FGSC A1156).